The sequence spans 259 residues: Protein FAM220A (259 aa).

2 disordered regions span residues 1–44 and 131–154; these read MRDR…ADAP and LGGG…RVSR. Residues 138–152 are compositionally biased toward basic and acidic residues; it reads TDGHRGQCPKGEPRV.

In terms of assembly, interacts with transcriptional activator STAT3; the interaction occurs in both the nucleus and the cytoplasm, is enhanced by IL6 and promotes STAT3 dephosphorylation, leading to negative regulation of STAT3 transcriptional activator activity. Can interact with both unphosphorylated and phosphorylated STAT3 but interacts preferentially with phosphorylated STAT3 in the nucleus. Interacts with protein phosphatase PTPN2/TC45; this promotes interaction of PTPN2 with STAT3, leading to dephosphorylation of STAT3 by PTPN2.

The protein localises to the nucleus. The protein resides in the cytoplasm. Its subcellular location is the cytoplasmic vesicle. It localises to the secretory vesicle. It is found in the acrosome. Promotes dephosphorylation of transcriptional activator STAT3 by interacting with both STAT3 and protein phosphatase PTPN2. This promotes interaction of PTPN2 with STAT3 and mediates STAT3 dephosphorylation by PTPN2, leading to negative regulation of STAT3 transcriptional activator activity. May be required for spermiogenesis or sperm function. This is Protein FAM220A from Homo sapiens (Human).